The chain runs to 866 residues: Pentatricopeptide repeat-containing protein At1g15510, chloroplastic (866 aa).

The N-terminal 52 residues, 1–52 (MASSAQSPHFYLNPGKSNSFQSKAYKQRNVNFYWNFGIRRLFLRKSQGLSVL), are a transit peptide targeting the chloroplast. PPR repeat units follow at residues 58 to 92 (STHF…RVAV), 93 to 123 (DEDV…ALSS), 128 to 158 (GVEL…MSER), 159 to 194 (NLFS…GVKP), 195 to 229 (DVYT…GYEL), 230 to 260 (DIDV…MPRR), 261 to 295 (DIIS…SVDP), 296 to 330 (DLMT…GFAV), 331 to 365 (DISV…DIVS), 366 to 396 (WTTM…SVKP), 397 to 431 (DEIT…RLIS), 432 to 466 (YVIV…NVIS), 467 to 493 (WTSI…MKMT), 497 to 531 (NAIT…GVGL), 532 to 561 (DDFL…SQKK), 562 to 596 (DVTS…RVRP), 597 to 631 (DEIT…GVTP), and 632 to 662 (NLKH…MPVT). Positions 667–742 (VWGALLNACR…DAGCSWVEVK (76 aa)) are type E motif. The type E(+) motif stretch occupies residues 743–773 (GKVHAFLSDDKYHPQTKEINTVLEGFYEKMS). The segment at 774 to 866 (EVGLTKISES…FKDGECSCGD (93 aa)) is type DYW motif.

It belongs to the PPR family. PCMP-H subfamily.

The protein localises to the plastid. It localises to the chloroplast. Its function is as follows. Regulates the RNA editing of the chloroplast transcript accD, and is essential for the early stages of chloroplast biogenesis. Required for the RNA editing of the chloroplast transcript ndhF. This chain is Pentatricopeptide repeat-containing protein At1g15510, chloroplastic (PCMP-H73), found in Arabidopsis thaliana (Mouse-ear cress).